Reading from the N-terminus, the 238-residue chain is Lytic polysaccharide monooxygenase NCU01050 (238 aa).

The signal sequence occupies residues 1-15 (MKVLAPLVLASAASA). Residue H16 participates in Cu(2+) binding. E45 serves as a coordination point for O2. 2 disulfides stabilise this stretch: C54/C186 and C156/C238. N-linked (GlcNAc...) asparagine glycosylation occurs at N75. A Cu(2+)-binding site is contributed by H99. 2 residues coordinate O2: H172 and Q181. Residue H172 is the Proton donor of the active site. Position 183 (Y183) interacts with Cu(2+).

It belongs to the polysaccharide monooxygenase AA9 family. Monomer. Cu(2+) serves as cofactor. In terms of processing, N-linked glycans containing mannose and N-acetylglucosamine.

It localises to the secreted. The enzyme catalyses [(1-&gt;4)-beta-D-glucosyl]n+m + reduced acceptor + O2 = 4-dehydro-beta-D-glucosyl-[(1-&gt;4)-beta-D-glucosyl]n-1 + [(1-&gt;4)-beta-D-glucosyl]m + acceptor + H2O.. It functions in the pathway glycan metabolism; cellulose degradation. Its activity is regulated as follows. Inhibited by increasing levels of ascorbic acid. In terms of biological role, catalyzes the oxidative cleavage of glycosidic bonds in cellulosic substrates via a copper-dependent mechanism. In the presence of an exogenous reductant ascorbic acid, degrades phosphoric acid swollen cellulose (PASC) to cello-oligosaccharides and 4-ketoaldoses, the end products oxidized at the non-reducing end. Somewhat active toward tamarind xyloglucan and konjac glucomannan, with improved activity with glucomannan in the presence of PASC. H(2)O(2) is able to substitute for O(2) in reactions with PASC, xyloglucan and glucomannan. Very weak activity on cellopentaose. No activity with birchwood xylan or ivory nut mannan. Disrupts plant cell wall polysaccharide substrates, such as recalcitrant crystalline cellulose. The protein is Lytic polysaccharide monooxygenase NCU01050 of Neurospora crassa (strain ATCC 24698 / 74-OR23-1A / CBS 708.71 / DSM 1257 / FGSC 987).